The chain runs to 263 residues: Phosphoinositide-3-kinase-interacting protein 1 (263 aa).

The first 21 residues, 1-21 (MLLAWVQAFLVSNMLLAEAYG), serve as a signal peptide directing secretion. The Extracellular segment spans residues 22 to 168 (SGGCFWDNGH…NSKEKKDLGT (147 aa)). One can recognise a Kringle domain in the interval 24 to 101 (GCFWDNGHLY…EKRPCENLSC (78 aa)). Disulfide bonds link Cys-25–Cys-101, Cys-46–Cys-82, and Cys-70–Cys-96. The N-linked (GlcNAc...) asparagine glycan is linked to Asn-98. A helical membrane pass occupies residues 169-189 (LGYVLGITMMVIIVAIGAGII). The Cytoplasmic portion of the chain corresponds to 190–263 (LGYSYKRGKD…LMGQAGTPGA (74 aa)). A compositionally biased stretch (polar residues) spans 242–251 (QTPVDPQEGS). Residues 242 to 263 (QTPVDPQEGSTPLMGQAGTPGA) form a disordered region.

The protein resides in the cell membrane. Functionally, negative regulator of hepatic phosphatidylinositol 3-kinase (PI3K) activity. The protein is Phosphoinositide-3-kinase-interacting protein 1 (PIK3IP1) of Pongo abelii (Sumatran orangutan).